Here is a 184-residue protein sequence, read N- to C-terminus: Outer-membrane lipoprotein carrier protein (184 aa).

The signal sequence occupies residues 1 to 19 (MRAFLKILMVLIFMSVAYA).

Belongs to the LolA family. In terms of assembly, monomer.

The protein localises to the periplasm. Functionally, participates in the translocation of lipoproteins from the inner membrane to the outer membrane. Only forms a complex with a lipoprotein if the residue after the N-terminal Cys is not an aspartate (The Asp acts as a targeting signal to indicate that the lipoprotein should stay in the inner membrane). The chain is Outer-membrane lipoprotein carrier protein from Helicobacter pylori (strain HPAG1).